We begin with the raw amino-acid sequence, 210 residues long: Glutathione S-transferase P 10 (210 aa).

A GST N-terminal domain is found at 2 to 81 (AVPQLYYFTI…HLGRVHGLNG (80 aa)). Residues Tyr-8, Trp-41, Lys-45, 52-53 (QL), and 65-66 (QT) contribute to the glutathione site. The 118-residue stretch at 83-200 (NEQEATFLDM…YLEKRKADKV (118 aa)) folds into the GST C-terminal domain.

The protein belongs to the GST superfamily. Pi family. Homodimer. As to expression, expressed in cells at the mouth and adjacent to the pharyngeal bulbs of the head and also in the tail.

The catalysed reaction is RX + glutathione = an S-substituted glutathione + a halide anion + H(+). In terms of biological role, conjugation of reduced glutathione to a wide number of exogenous and endogenous hydrophobic electrophiles. Responsible for approximately one-third of 4-hydroxy-2-nonenal conjugation. May play a role in the detoxification of reactive oxygen species produced during pathogenic bacterial infection. The sequence is that of Glutathione S-transferase P 10 from Caenorhabditis elegans.